Consider the following 606-residue polypeptide: WD repeat-containing protein 1 (606 aa).

WD repeat units follow at residues 4–45 (EIKK…LRNI), 48–87 (PAIA…IWDT), 93–135 (LLKY…LWDT), 138–176 (SVGE…FFEG), 180–218 (KFKF…IYDG), 224–263 (VCAL…IWDV), 270–306 (STFP…YLDK), 311–351 (KPLR…YWDS), 358–408 (SFSG…KLDV), 432–474 (LKDQ…VYSI), 480–518 (KDEG…VFSV), 523–561 (SENN…VWTL), and 566–604 (TKVK…EWTI). 4 positions are modified to N6-acetyllysine: K28, K81, K95, and K115. At Y238 the chain carries Phosphotyrosine. K480 bears the N6-acetyllysine mark.

The protein belongs to the WD repeat AIP1 family.

The protein resides in the cytoplasm. It is found in the cytoskeleton. Its subcellular location is the cell projection. It localises to the podosome. Its function is as follows. Induces disassembly of actin filaments in conjunction with ADF/cofilin family proteins. Enhances cofilin-mediated actin severing. Involved in cytokinesis. Involved in chemotactic cell migration by restricting lamellipodial membrane protrusions. Involved in myocardium sarcomere organization. Required for cardiomyocyte growth at the postnatal and maintenance at the adult stage. Involved in neutrophil actin dynamics and migration. Involved in megakaryocyte maturation and platelet shedding. Required for the establishment of planar cell polarity (PCP) during follicular epithelium development and for cell shape changes during PCP; the function seems to implicate cooperation with CFL1 and/or DSTN/ADF. Involved in the generation/maintenance of cortical tension. Involved in assembly and maintenance of epithelial apical cell junctions and plays a role in the organization of the perijunctional actomyosin belt. In Mus musculus (Mouse), this protein is WD repeat-containing protein 1 (Wdr1).